The chain runs to 348 residues: Cell surface glycoprotein CD200 receptor 1 (348 aa).

Positions 1-24 (MLCPWRTANLGLLLILTIFLVAEA) are cleaved as a signal peptide. Over 29–265 (QPNNSLMLQT…PVPGAKKSAK (237 aa)) the chain is Extracellular. Asn-31, Asn-60, Asn-69, Asn-116, Asn-122, Asn-185, Asn-218, Asn-233, and Asn-247 each carry an N-linked (GlcNAc...) asparagine glycan. Disulfide bonds link Cys-83–Cys-155 and Cys-107–Cys-123. One can recognise an Ig-like C2-type domain in the interval 160 to 251 (PDGNFHRGYH…SHLTGNKSLY (92 aa)). 2 cysteine pairs are disulfide-bonded: Cys-190/Cys-239 and Cys-209/Cys-227. Residues 266-286 (LYIPYIILTIIILTIVGFIWL) traverse the membrane as a helical segment. Topologically, residues 287–348 (LKVNGCRKYK…SEVDTDLHTL (62 aa)) are cytoplasmic.

It belongs to the CD200R family. As to quaternary structure, CD200 and CD200R1 interact via their respective N-terminal Ig-like domains. Interacts with Human herpesvirus 8 vOX2 protein. In terms of assembly, (Microbial infection) Interacts with human herpesvirus 8/HHV-8 protein vOX2/K14. As to expression, expressed in granulocytes, monocytes, most T-cells, neutrophils, basophils and a subset of NK, NKT and B-cells (at protein level). Expressed in bone marrow, lymph nodes, spleen, lung, liver, spinal cord, kidney. Expressed in monocyte-derived dendritic and mast cells.

It is found in the cell membrane. The protein localises to the secreted. Inhibitory receptor for the CD200/OX2 cell surface glycoprotein. Limits inflammation by inhibiting the expression of pro-inflammatory molecules including TNF-alpha, interferons, and inducible nitric oxide synthase (iNOS) in response to selected stimuli. Also binds to HHV-8 K14 viral CD200 homolog with identical affinity and kinetics as the host CD200. The sequence is that of Cell surface glycoprotein CD200 receptor 1 (CD200R1) from Homo sapiens (Human).